The chain runs to 691 residues: Penicillin-binding protein 2D (691 aa).

At 1–19 (MDAMTNKRLRLTLKTVRAF) the chain is on the cytoplasmic side. A helical; Signal-anchor for type II membrane protein transmembrane segment spans residues 20–40 (IFLGAFAALAAAAVFMTVILI). The Extracellular segment spans residues 41–691 (AKYQGAPSVQ…WWDKWLGRHH (651 aa)). Positions 55 to 223 (TILYASDGSK…PSGYSPYVNE (169 aa)) are transglycosylase. Residue glutamate 94 is the Proton donor; for transglycosylase activity of the active site. The transpeptidase stretch occupies residues 327–605 (VGFSAIDPRT…AKTIWADFME (279 aa)). Serine 365 serves as the catalytic Acyl-ester intermediate; for transpeptidase activity. Residues 663-691 (AKQTKDRLPSKEKPASEKKWWDKWLGRHH) are disordered. Residues 664–691 (KQTKDRLPSKEKPASEKKWWDKWLGRHH) are compositionally biased toward basic and acidic residues.

The protein in the N-terminal section; belongs to the glycosyltransferase 51 family. In the C-terminal section; belongs to the transpeptidase family.

The protein resides in the cell membrane. It catalyses the reaction [GlcNAc-(1-&gt;4)-Mur2Ac(oyl-L-Ala-gamma-D-Glu-L-Lys-D-Ala-D-Ala)](n)-di-trans,octa-cis-undecaprenyl diphosphate + beta-D-GlcNAc-(1-&gt;4)-Mur2Ac(oyl-L-Ala-gamma-D-Glu-L-Lys-D-Ala-D-Ala)-di-trans,octa-cis-undecaprenyl diphosphate = [GlcNAc-(1-&gt;4)-Mur2Ac(oyl-L-Ala-gamma-D-Glu-L-Lys-D-Ala-D-Ala)](n+1)-di-trans,octa-cis-undecaprenyl diphosphate + di-trans,octa-cis-undecaprenyl diphosphate + H(+). It carries out the reaction Preferential cleavage: (Ac)2-L-Lys-D-Ala-|-D-Ala. Also transpeptidation of peptidyl-alanyl moieties that are N-acyl substituents of D-alanine.. The protein operates within cell wall biogenesis; peptidoglycan biosynthesis. Functionally, involved in the polymerization and cross-linking of spore peptidoglycan. May be required for synthesis of the spore germ cell wall, the first layer of peptidoglycan synthesized on the surface of the inner forespore membrane. The sequence is that of Penicillin-binding protein 2D (pbpG) from Bacillus subtilis (strain 168).